The sequence spans 346 residues: Phosphoribosylformylglycinamidine cyclo-ligase (346 aa).

This sequence belongs to the AIR synthase family.

Its subcellular location is the cytoplasm. The enzyme catalyses 2-formamido-N(1)-(5-O-phospho-beta-D-ribosyl)acetamidine + ATP = 5-amino-1-(5-phospho-beta-D-ribosyl)imidazole + ADP + phosphate + H(+). Its pathway is purine metabolism; IMP biosynthesis via de novo pathway; 5-amino-1-(5-phospho-D-ribosyl)imidazole from N(2)-formyl-N(1)-(5-phospho-D-ribosyl)glycinamide: step 2/2. This chain is Phosphoribosylformylglycinamidine cyclo-ligase, found in Bacillus licheniformis (strain ATCC 14580 / DSM 13 / JCM 2505 / CCUG 7422 / NBRC 12200 / NCIMB 9375 / NCTC 10341 / NRRL NRS-1264 / Gibson 46).